Here is a 202-residue protein sequence, read N- to C-terminus: MSGLSEKEVFLLLSSLQCTHGFLGTFDCRFPGFINKVKVQTAIINTGPREQGGIHWIALAWDPKSYQMFIFDPLGWKNDQLMKYYKFSYSNLIKRSALSSPDKCVKVIKNSQSVQCTCAGSCGLFCVFFLYCFYKYKSNAFKNCLFQSLYGSIPSLTPPNPTNLHKNQDFLYKFFKEKSLYFRQNEEYIVSNTKIGLIKSHI.

Active-site residues include histidine 55, aspartate 72, and cysteine 122.

Belongs to the peptidase C5 family. In terms of assembly, interacts with protease cofactor pVI-C; this interaction is necessary for protease activation.

It localises to the virion. Its subcellular location is the host nucleus. The catalysed reaction is Cleaves proteins of the adenovirus and its host cell at two consensus sites: -Yaa-Xaa-Gly-Gly-|-Xaa- and -Yaa-Xaa-Gly-Xaa-|-Gly- (in which Yaa is Met, Ile or Leu, and Xaa is any amino acid).. With respect to regulation, requires DNA and protease cofactor for maximal activation. Inside nascent virions, becomes partially activated by binding to the viral DNA, allowing it to cleave the cofactor that binds to the protease and fully activates it. Actin, like the viral protease cofactor, seems to act as a cofactor in the cleavage of cytokeratin 18 and of actin itself. Functionally, cleaves viral precursor proteins (pTP, pIIIa, pVI, pVII, pVIII, and pX) inside newly assembled particles giving rise to mature virions. Protease complexed to its cofactor slides along the viral DNA to specifically locate and cleave the viral precursors. Mature virions have a weakened organization compared to the unmature virions, thereby facilitating subsequent uncoating. Without maturation, the particle lacks infectivity and is unable to uncoat. Late in adenovirus infection, in the cytoplasm, may participate in the cytoskeleton destruction. Cleaves host cell cytoskeletal keratins K7 and K18. The chain is Protease from Bovine adenovirus 7 (BAdV-7).